The chain runs to 900 residues: Alanine--tRNA ligase (900 aa).

Zn(2+) contacts are provided by His604, His608, Cys708, and His712.

Belongs to the class-II aminoacyl-tRNA synthetase family. Zn(2+) is required as a cofactor.

It is found in the cytoplasm. It carries out the reaction tRNA(Ala) + L-alanine + ATP = L-alanyl-tRNA(Ala) + AMP + diphosphate. Catalyzes the attachment of alanine to tRNA(Ala) in a two-step reaction: alanine is first activated by ATP to form Ala-AMP and then transferred to the acceptor end of tRNA(Ala). Also edits incorrectly charged Ser-tRNA(Ala) and Gly-tRNA(Ala) via its editing domain. The protein is Alanine--tRNA ligase of Saccharolobus islandicus (strain Y.G.57.14 / Yellowstone #1) (Sulfolobus islandicus).